We begin with the raw amino-acid sequence, 70 residues long: Large ribosomal subunit protein bL28c (70 aa).

It belongs to the bacterial ribosomal protein bL28 family.

The protein localises to the plastid. It is found in the cyanelle. This chain is Large ribosomal subunit protein bL28c (rpl28), found in Cyanophora paradoxa.